The chain runs to 236 residues: 7-cyano-7-deazaguanine synthase (236 aa).

13–23 (FSGGQDSTVCL) contributes to the ATP binding site. Residues cysteine 200, cysteine 215, cysteine 218, and cysteine 221 each coordinate Zn(2+).

This sequence belongs to the QueC family. The cofactor is Zn(2+).

The enzyme catalyses 7-carboxy-7-deazaguanine + NH4(+) + ATP = 7-cyano-7-deazaguanine + ADP + phosphate + H2O + H(+). It participates in purine metabolism; 7-cyano-7-deazaguanine biosynthesis. In terms of biological role, catalyzes the ATP-dependent conversion of 7-carboxy-7-deazaguanine (CDG) to 7-cyano-7-deazaguanine (preQ(0)). In Parvibaculum lavamentivorans (strain DS-1 / DSM 13023 / NCIMB 13966), this protein is 7-cyano-7-deazaguanine synthase.